Here is a 466-residue protein sequence, read N- to C-terminus: Ribosomal protein uS12 methylthiotransferase RimO (466 aa).

The region spanning 31–141 (PTIGMVSLGC…VLDAVHGAVP (111 aa)) is the MTTase N-terminal domain. The [4Fe-4S] cluster site is built by C40, C76, C105, C172, C176, and C179. Positions 158–397 (LTPRHYSYLK…MAKAQAISEA (240 aa)) constitute a Radical SAM core domain. In terms of domain architecture, TRAM spans 400 to 466 (AARVGQVIEV…GEYDLWGRLR (67 aa)).

Belongs to the methylthiotransferase family. RimO subfamily. Requires [4Fe-4S] cluster as cofactor.

It is found in the cytoplasm. It carries out the reaction L-aspartate(89)-[ribosomal protein uS12]-hydrogen + (sulfur carrier)-SH + AH2 + 2 S-adenosyl-L-methionine = 3-methylsulfanyl-L-aspartate(89)-[ribosomal protein uS12]-hydrogen + (sulfur carrier)-H + 5'-deoxyadenosine + L-methionine + A + S-adenosyl-L-homocysteine + 2 H(+). Functionally, catalyzes the methylthiolation of an aspartic acid residue of ribosomal protein uS12. This Ruegeria pomeroyi (strain ATCC 700808 / DSM 15171 / DSS-3) (Silicibacter pomeroyi) protein is Ribosomal protein uS12 methylthiotransferase RimO.